The chain runs to 113 residues: MTGHAFGIVMPEVVKTVVGTAASAIYHYPTAVMATFVTAAVVASPENAAETVKNAACTVMKAAECAYHDVAGIVNVAAGVGHFVYDNLPSYGEMDLVGSDSMEAVIPWIGAVA.

Belongs to the UPF0416 family.

The chain is UPF0416 protein RF_0879 from Rickettsia felis (strain ATCC VR-1525 / URRWXCal2) (Rickettsia azadi).